The primary structure comprises 301 residues: Phosphoglycolate phosphatase 2 (301 aa).

Residue Asp19 is the Nucleophile of the active site.

It belongs to the HAD-like hydrolase superfamily. CbbY/CbbZ/Gph/YieH family.

The enzyme catalyses 2-phosphoglycolate + H2O = glycolate + phosphate. In terms of biological role, dephosphorylates 2-phosphoglycolate, but does not contribute to photorespiratory metabolism. The sequence is that of Phosphoglycolate phosphatase 2 (PGLP2) from Arabidopsis thaliana (Mouse-ear cress).